Consider the following 510-residue polypeptide: ATP synthase subunit alpha, mitochondrial (510 aa).

171 to 178 is a binding site for ATP; the sequence is GDRQTGKT.

This sequence belongs to the ATPase alpha/beta chains family. As to quaternary structure, F-type ATPases have 2 components, CF(1) - the catalytic core - and CF(0) - the membrane proton channel. CF(1) has five subunits: alpha(3), beta(3), gamma(1), delta(1), epsilon(1). CF(0) has three main subunits: a, b and c.

The protein localises to the mitochondrion. It is found in the mitochondrion inner membrane. Functionally, mitochondrial membrane ATP synthase (F(1)F(0) ATP synthase or Complex V) produces ATP from ADP in the presence of a proton gradient across the membrane which is generated by electron transport complexes of the respiratory chain. F-type ATPases consist of two structural domains, F(1) - containing the extramembraneous catalytic core, and F(0) - containing the membrane proton channel, linked together by a central stalk and a peripheral stalk. During catalysis, ATP synthesis in the catalytic domain of F(1) is coupled via a rotary mechanism of the central stalk subunits to proton translocation. Subunits alpha and beta form the catalytic core in F(1). Rotation of the central stalk against the surrounding alpha(3)beta(3) subunits leads to hydrolysis of ATP in three separate catalytic sites on the beta subunits. Subunit alpha does not bear the catalytic high-affinity ATP-binding sites. The chain is ATP synthase subunit alpha, mitochondrial (ATPA) from Helianthus annuus (Common sunflower).